The chain runs to 360 residues: Beta-1,3-N-acetylglucosaminyltransferase manic fringe (360 aa).

Residues 1-5 are Cytoplasmic-facing; the sequence is MILRR. The chain crosses the membrane as a helical; Signal-anchor for type II membrane protein span at residues 6-26; sequence LFHVLPAFAFTLFILVLLDLQ. Topologically, residues 27-360 are lumenal; it reads LRTRSDQKPQ…ALSWNQHVMH (334 aa). A disordered region spans residues 51–74; that stretch reads TTAENQHRDGAHEKEKAEGQKWTE. Residues 55–74 show a composition bias toward basic and acidic residues; the sequence is NQHRDGAHEKEKAEGQKWTE. Residue arginine 100 participates in substrate binding. Disulfide bonds link cysteine 139–cysteine 150 and cysteine 168–cysteine 231. Position 172 (aspartate 172) interacts with substrate. Residue aspartate 173 coordinates Mn(2+). The N-linked (GlcNAc...) asparagine glycan is linked to asparagine 214. Aspartate 261 is an active-site residue. Histidine 285 lines the Mn(2+) pocket. Cysteines 335 and 344 form a disulfide.

It belongs to the glycosyltransferase 31 family. Mn(2+) serves as cofactor.

The protein localises to the golgi apparatus membrane. It carries out the reaction 3-O-(alpha-L-fucosyl)-L-threonyl-[EGF-like domain protein] + UDP-N-acetyl-alpha-D-glucosamine = 3-O-(N-acetyl-beta-D-glucosaminyl-(1-&gt;3)-alpha-L-fucosyl)-L-threonyl-[EGF-like domain protein] + UDP + H(+). It catalyses the reaction 3-O-(alpha-L-fucosyl)-L-seryl-[EGF-like domain protein] + UDP-N-acetyl-alpha-D-glucosamine = 3-O-(N-acetyl-beta-D-glucosaminyl-(1-&gt;3)-alpha-L-fucosyl)-L-seryl-[EGF-like domain protein] + UDP + H(+). In terms of biological role, glycosyltransferase that initiates the elongation of O-linked fucose residues attached to EGF-like repeats in the extracellular domain of Notch molecules. The protein is Beta-1,3-N-acetylglucosaminyltransferase manic fringe of Danio rerio (Zebrafish).